The primary structure comprises 563 residues: Mitochondrial distribution and morphology protein 34 (563 aa).

An SMP-LTD domain is found at 1-195 (MAFNFNWSPL…LPAIIHRLSL (195 aa)). Disordered regions lie at residues 298–499 (ERGD…PHTP) and 531–563 (ARRQ…PKAL). 2 stretches are compositionally biased toward polar residues: residues 303–332 (AGTT…FSNR) and 346–357 (SLVNMNSATTGL). The span at 365–383 (SRSHPTRKKKNRVVNLRKP) shows a compositional bias: basic residues. A compositionally biased stretch (low complexity) spans 386 to 407 (TESSESGESETASTTAVSEPTV). 2 stretches are compositionally biased toward polar residues: residues 458-471 (PSLT…INTQ) and 478-488 (YNQSASTSYTP). A compositionally biased stretch (basic and acidic residues) spans 531–540 (ARRQHDDKTA).

This sequence belongs to the MDM34 family. Component of the ER-mitochondria encounter structure (ERMES) or MDM complex, composed of MMM1, MDM10, MDM12 and MDM34.

The protein localises to the mitochondrion outer membrane. Component of the ERMES/MDM complex, which serves as a molecular tether to connect the endoplasmic reticulum (ER) and mitochondria. Components of this complex are involved in the control of mitochondrial shape and protein biogenesis, and function in nonvesicular lipid trafficking between the ER and mitochondria. MDM34 is required for the interaction of the ER-resident membrane protein MMM1 and the outer mitochondrial membrane-resident beta-barrel protein MDM10. The protein is Mitochondrial distribution and morphology protein 34 of Botryotinia fuckeliana (strain B05.10) (Noble rot fungus).